The primary structure comprises 493 residues: Cytochrome P450 2E1 (493 aa).

298-303 contacts substrate; the sequence is FAGTET. Cysteine 437 is a heme binding site.

It belongs to the cytochrome P450 family. Interacts with chaperones HSP70 and HSP90; this interaction is required for initial targeting to mitochondria. It depends on heme as a cofactor.

It is found in the endoplasmic reticulum membrane. The protein resides in the microsome membrane. It localises to the mitochondrion inner membrane. The catalysed reaction is an organic molecule + reduced [NADPH--hemoprotein reductase] + O2 = an alcohol + oxidized [NADPH--hemoprotein reductase] + H2O + H(+). The enzyme catalyses (5Z,8Z,11Z)-eicosatrienoate + reduced [NADPH--hemoprotein reductase] + O2 = 19-hydroxy-(5Z,8Z,11Z)-eicosatrienoate + oxidized [NADPH--hemoprotein reductase] + H2O + H(+). It catalyses the reaction (5Z,8Z,11Z,14Z,17Z)-eicosapentaenoate + reduced [NADPH--hemoprotein reductase] + O2 = 19-hydroxy-(5Z,8Z,11Z,14Z,17Z)-eicosapentaenoate + oxidized [NADPH--hemoprotein reductase] + H2O + H(+). It carries out the reaction (4Z,7Z,10Z,13Z,16Z,19Z)-docosahexaenoate + reduced [NADPH--hemoprotein reductase] + O2 = 21-hydroxy-(4Z,7Z,10Z,13Z,16Z,19Z)-docosahexaenoate + oxidized [NADPH--hemoprotein reductase] + H2O + H(+). The catalysed reaction is dodecanoate + reduced [NADPH--hemoprotein reductase] + O2 = 11-hydroxydodecanoate + oxidized [NADPH--hemoprotein reductase] + H2O + H(+). The enzyme catalyses tetradecanoate + reduced [NADPH--hemoprotein reductase] + O2 = 13-hydroxytetradecanoate + oxidized [NADPH--hemoprotein reductase] + H2O + H(+). It catalyses the reaction 4-nitrophenol + NADPH + O2 + H(+) = 4-nitrocatechol + NADP(+) + H2O. It participates in lipid metabolism; fatty acid metabolism. The omega-1 hydroxylase activity is stimulated by cytochrome b5. Its function is as follows. A cytochrome P450 monooxygenase involved in the metabolism of fatty acids. Mechanistically, uses molecular oxygen inserting one oxygen atom into a substrate, and reducing the second into a water molecule, with two electrons provided by NADPH via cytochrome P450 reductase (NADPH--hemoprotein reductase). Catalyzes the hydroxylation of carbon-hydrogen bonds. Hydroxylates fatty acids specifically at the omega-1 position displaying the highest catalytic activity for saturated fatty acids. May be involved in the oxidative metabolism of xenobiotics. The sequence is that of Cytochrome P450 2E1 (CYP2E1) from Macaca mulatta (Rhesus macaque).